We begin with the raw amino-acid sequence, 397 residues long: Ribosomal RNA large subunit methyltransferase I (397 aa).

Residues 2-79 (TAAIYLVKGR…KEEINKAFFV (78 aa)) form the PUA domain.

Belongs to the methyltransferase superfamily. RlmI family.

It localises to the cytoplasm. It catalyses the reaction cytidine(1962) in 23S rRNA + S-adenosyl-L-methionine = 5-methylcytidine(1962) in 23S rRNA + S-adenosyl-L-homocysteine + H(+). Its function is as follows. Specifically methylates the cytosine at position 1962 (m5C1962) of 23S rRNA. In Vibrio campbellii (strain ATCC BAA-1116), this protein is Ribosomal RNA large subunit methyltransferase I.